The sequence spans 100 residues: uncharacterized protein (100 aa).

Residues 1 to 26 (MKRLLVSLRVWMVFLMNWVTPDRKTA) form the signal peptide.

This is an uncharacterized protein from Bacillus subtilis (strain 168).